Reading from the N-terminus, the 129-residue chain is Small ribosomal subunit protein uS12 (129 aa).

Residues 1–25 (MPTYNQLVRFGRKSKTRKTKSPALE) form a disordered region. The span at 10–20 (FGRKSKTRKTK) shows a compositional bias: basic residues. Aspartate 89 carries the post-translational modification 3-methylthioaspartic acid. The interval 109-129 (GRKQGRSRYGTPRKQVAVTKK) is disordered.

It belongs to the universal ribosomal protein uS12 family. In terms of assembly, part of the 30S ribosomal subunit. Contacts proteins S8 and S17. May interact with IF1 in the 30S initiation complex.

Functionally, with S4 and S5 plays an important role in translational accuracy. Its function is as follows. Interacts with and stabilizes bases of the 16S rRNA that are involved in tRNA selection in the A site and with the mRNA backbone. Located at the interface of the 30S and 50S subunits, it traverses the body of the 30S subunit contacting proteins on the other side and probably holding the rRNA structure together. The combined cluster of proteins S8, S12 and S17 appears to hold together the shoulder and platform of the 30S subunit. This is Small ribosomal subunit protein uS12 from Rickettsia peacockii (strain Rustic).